The primary structure comprises 108 residues: Ig kappa chain V region K-25 (108 aa).

Positions 1-23 (AVELTQTPASVEAAVGGTVTIKC) are framework-1. The tract at residues 24 to 34 (QASQBIYSYLS) is complementarity-determining-1. Positions 35 to 49 (WYQQKPGQPPKLLIY) are framework-2. The complementarity-determining-2 stretch occupies residues 50–56 (KASTLAS). Residues 57 to 88 (GVSSRFKGSGSGTEFTLTISDLZCADAATYYC) are framework-3. The tract at residues 89–97 (QTYSYSSTY) is complementarity-determining-3. Residues 98–107 (FGGGTEVVVK) are framework-4.

The sequence is that of Ig kappa chain V region K-25 from Oryctolagus cuniculus (Rabbit).